Reading from the N-terminus, the 147-residue chain is Myoglobin (147 aa).

The region spanning 2–141 is the Globin domain; that stretch reads ADFDMVLKCW…IIADMEADYK (140 aa). His60 is a nitrite binding site. His60 is an O2 binding site. Residue His89 coordinates heme b.

The protein belongs to the globin family. In terms of assembly, monomeric.

The protein localises to the cytoplasm. It localises to the sarcoplasm. It carries out the reaction Fe(III)-heme b-[protein] + nitric oxide + H2O = Fe(II)-heme b-[protein] + nitrite + 2 H(+). The enzyme catalyses H2O2 + AH2 = A + 2 H2O. Monomeric heme protein which primary function is to store oxygen and facilitate its diffusion within muscle tissues. Reversibly binds oxygen through a pentacoordinated heme iron and enables its timely and efficient release as needed during periods of heightened demand. Depending on the oxidative conditions of tissues and cells, and in addition to its ability to bind oxygen, it also has a nitrite reductase activity whereby it regulates the production of bioactive nitric oxide. Under stress conditions, like hypoxia and anoxia, it also protects cells against reactive oxygen species thanks to its pseudoperoxidase activity. This is Myoglobin (mb) from Pseudochaenichthys georgianus (South Georgia icefish).